Consider the following 318-residue polypeptide: Olfactory receptor 13C7 (318 aa).

The Extracellular portion of the chain corresponds to 1–27 (MVSANQTASVTEFILLGLSAHPKLEKT). A helical transmembrane segment spans residues 28-48 (FFVLILLMYLVILLGNGVLIL). Residues 49–61 (MTVSNSHLHMPMY) are Cytoplasmic-facing. The chain crosses the membrane as a helical span at residues 62–82 (FFLGNLSFLDICYTTSSVPLI). The Extracellular portion of the chain corresponds to 83–100 (LDSFLTPRKTISFSACAV). A helical transmembrane segment spans residues 101–121 (QMFLSFAMGATECVLLSMMAF). The Cytoplasmic segment spans residues 122–181 (DRYVAICNPLRYPVVMSKAAYMPKAAGSWVAGSTASMVQTSLAMRLPFCGDNIINHFTCE). The chain crosses the membrane as a helical span at residues 182 to 202 (ILAVLKLACADISVNVISMGV). Residues 203-205 (TNV) lie on the Extracellular side of the membrane. A helical transmembrane segment spans residues 206–226 (IFLGVPVLFISFSYVFIIATI). The Cytoplasmic segment spans residues 227 to 238 (LRIPSAEGRKKA). The chain crosses the membrane as a helical span at residues 239-259 (FSTCSAHLTVVVIFYGTILFM). Over 260 to 278 (YGKPKSKDPLGADKQDLAD) the chain is Extracellular. Residues 279-289 (KLISLFYGVVT) traverse the membrane as a helical segment. Over 290–318 (PMLNPIIYSLRNKDVKAAVRDLIFQKCFA) the chain is Cytoplasmic.

The protein belongs to the G-protein coupled receptor 1 family.

It is found in the cell membrane. Its function is as follows. Odorant receptor. This Homo sapiens (Human) protein is Olfactory receptor 13C7.